Consider the following 216-residue polypeptide: Elongation factor Ts (216 aa).

The tract at residues 81–84 (TDFV) is involved in Mg(2+) ion dislocation from EF-Tu.

It belongs to the EF-Ts family.

The protein resides in the cytoplasm. In terms of biological role, associates with the EF-Tu.GDP complex and induces the exchange of GDP to GTP. It remains bound to the aminoacyl-tRNA.EF-Tu.GTP complex up to the GTP hydrolysis stage on the ribosome. The sequence is that of Elongation factor Ts from Geotalea uraniireducens (strain Rf4) (Geobacter uraniireducens).